Reading from the N-terminus, the 323-residue chain is Muscleblind-like protein 3 (323 aa).

4 C3H1-type zinc fingers span residues 13–41 (WLTL…HPSR), 47–73 (NGRV…HPPP), 177–205 (TDKL…HPLE), and 213–239 (ENSV…HPPA).

The protein belongs to the muscleblind family. Expressed in fast and slow myotomal muscle, heart, liver, skin, brain and testis.

The protein localises to the nucleus. The protein resides in the cytoplasm. Functionally, involved in pre-mRNA alternative splicing regulation. Could inhibit terminal muscle differentiation, acting at approximately the time of myogenin induction. The protein is Muscleblind-like protein 3 (mbnl3) of Takifugu rubripes (Japanese pufferfish).